We begin with the raw amino-acid sequence, 662 residues long: UvrABC system protein B (662 aa).

Positions 25-411 (DGIIAGDKFQ…STRIVEQVIR (387 aa)) constitute a Helicase ATP-binding domain. 38–45 (GVTGSGKT) serves as a coordination point for ATP. The Beta-hairpin motif lies at 91–114 (YYDYYQPEAYVPARDLYIEKDASI). Residues 428–594 (QMEHIYGEVK…TIKKAIEDIL (167 aa)) form the Helicase C-terminal domain. The region spanning 625 to 660 (KKLIKKLEAQMAEYADMLMFEEAAVIRDKIEEVKRI) is the UVR domain.

It belongs to the UvrB family. In terms of assembly, forms a heterotetramer with UvrA during the search for lesions. Interacts with UvrC in an incision complex.

The protein resides in the cytoplasm. In terms of biological role, the UvrABC repair system catalyzes the recognition and processing of DNA lesions. A damage recognition complex composed of 2 UvrA and 2 UvrB subunits scans DNA for abnormalities. Upon binding of the UvrA(2)B(2) complex to a putative damaged site, the DNA wraps around one UvrB monomer. DNA wrap is dependent on ATP binding by UvrB and probably causes local melting of the DNA helix, facilitating insertion of UvrB beta-hairpin between the DNA strands. Then UvrB probes one DNA strand for the presence of a lesion. If a lesion is found the UvrA subunits dissociate and the UvrB-DNA preincision complex is formed. This complex is subsequently bound by UvrC and the second UvrB is released. If no lesion is found, the DNA wraps around the other UvrB subunit that will check the other stand for damage. This chain is UvrABC system protein B, found in Treponema denticola (strain ATCC 35405 / DSM 14222 / CIP 103919 / JCM 8153 / KCTC 15104).